We begin with the raw amino-acid sequence, 194 residues long: FK506-binding protein 3 (194 aa).

A signal peptide spans 1-19 (MNKFLIALLVLATLAVSFS). In terms of domain architecture, PPIase FKBP-type spans 44–133 (GDYISLKYVG…YFDLEVVSIE (90 aa)). A helical membrane pass occupies residues 148–168 (VGTIIAFSMLAGFIVLVKFII). Residues 173–194 (DESNSKKPAPGKPKKTKAAKQN) form a disordered region. The segment covering 184-194 (KPKKTKAAKQN) has biased composition (basic residues).

It belongs to the FKBP-type PPIase family.

It localises to the membrane. The catalysed reaction is [protein]-peptidylproline (omega=180) = [protein]-peptidylproline (omega=0). Its activity is regulated as follows. Inhibited by both FK506 and rapamycin. In terms of biological role, PPIases accelerate the folding of proteins by catalyzing the cis-trans isomerization of proline imidic peptide bonds in oligopeptides. This chain is FK506-binding protein 3 (fkbp3), found in Dictyostelium discoideum (Social amoeba).